Here is a 380-residue protein sequence, read N- to C-terminus: Cytochrome b (380 aa).

A run of 4 helical transmembrane segments spans residues 28 to 48 (IGSL…FLSL), 72 to 93 (WLVR…YAHI), 109 to 129 (WLVG…GYVL), and 174 to 194 (FYSF…VHLL). The heme b site is built by histidine 78 and histidine 92. Residues histidine 178 and histidine 192 each coordinate heme b. Histidine 197 is an a ubiquinone binding site. A run of 4 helical transmembrane segments spans residues 222-243 (WKIL…CYIT), 285-305 (IGGV…PLAL), 317-337 (IGQL…WLGA), and 344-364 (YISL…LYMI).

This sequence belongs to the cytochrome b family. The main subunits of complex b-c1 are: cytochrome b, cytochrome c1 and the Rieske protein. Heme b is required as a cofactor.

It is found in the mitochondrion inner membrane. Its function is as follows. Component of the ubiquinol-cytochrome c reductase complex (complex III or cytochrome b-c1 complex) that is part of the mitochondrial respiratory chain. The b-c1 complex mediates electron transfer from ubiquinol to cytochrome c. Contributes to the generation of a proton gradient across the mitochondrial membrane that is then used for ATP synthesis. This chain is Cytochrome b (MT-CYB), found in Cepaea nemoralis (Banded wood snail).